Here is a 360-residue protein sequence, read N- to C-terminus: Phenylalanine--tRNA ligase alpha subunit (360 aa).

Position 260 (Glu-260) interacts with Mg(2+).

The protein belongs to the class-II aminoacyl-tRNA synthetase family. Phe-tRNA synthetase alpha subunit type 1 subfamily. Tetramer of two alpha and two beta subunits. The cofactor is Mg(2+).

The protein localises to the cytoplasm. It catalyses the reaction tRNA(Phe) + L-phenylalanine + ATP = L-phenylalanyl-tRNA(Phe) + AMP + diphosphate + H(+). This chain is Phenylalanine--tRNA ligase alpha subunit, found in Rhodopseudomonas palustris (strain BisB5).